Reading from the N-terminus, the 184-residue chain is Peptide deformylase (184 aa).

Fe cation-binding residues include Cys98 and His140. The active site involves Glu141. Residue His144 participates in Fe cation binding.

Belongs to the polypeptide deformylase family. The cofactor is Fe(2+).

It carries out the reaction N-terminal N-formyl-L-methionyl-[peptide] + H2O = N-terminal L-methionyl-[peptide] + formate. Removes the formyl group from the N-terminal Met of newly synthesized proteins. Requires at least a dipeptide for an efficient rate of reaction. N-terminal L-methionine is a prerequisite for activity but the enzyme has broad specificity at other positions. This is Peptide deformylase from Phocaeicola vulgatus (strain ATCC 8482 / DSM 1447 / JCM 5826 / CCUG 4940 / NBRC 14291 / NCTC 11154) (Bacteroides vulgatus).